Reading from the N-terminus, the 368-residue chain is Flagellar P-ring protein (368 aa).

Positions 1–22 (MLIPLARAVLALELLGAGAAHA) are cleaved as a signal peptide.

It belongs to the FlgI family. The basal body constitutes a major portion of the flagellar organelle and consists of four rings (L,P,S, and M) mounted on a central rod.

It is found in the periplasm. The protein resides in the bacterial flagellum basal body. Its function is as follows. Assembles around the rod to form the L-ring and probably protects the motor/basal body from shearing forces during rotation. This is Flagellar P-ring protein from Bordetella pertussis (strain Tohama I / ATCC BAA-589 / NCTC 13251).